The primary structure comprises 147 residues: Formiminotransferase N-terminal subdomain-containing protein (147 aa).

A signal peptide spans 1–20 (MSSSRVGLRLAACLLNVSEA).

The protein belongs to the formiminotransferase family. Widely expressed with highest levels in liver and skeletal muscle, and moderate levels in kidney, bone and pancreas.

This is Formiminotransferase N-terminal subdomain-containing protein (FTCDNL1) from Homo sapiens (Human).